The sequence spans 354 residues: Methylthioribose-1-phosphate isomerase (354 aa).

Substrate contacts are provided by residues 58-60 (RGA), Arg101, and Gln204. Asp245 (proton donor) is an active-site residue. Residue 255 to 256 (NK) participates in substrate binding.

Belongs to the eIF-2B alpha/beta/delta subunits family. MtnA subfamily.

The enzyme catalyses 5-(methylsulfanyl)-alpha-D-ribose 1-phosphate = 5-(methylsulfanyl)-D-ribulose 1-phosphate. It functions in the pathway amino-acid biosynthesis; L-methionine biosynthesis via salvage pathway; L-methionine from S-methyl-5-thio-alpha-D-ribose 1-phosphate: step 1/6. Catalyzes the interconversion of methylthioribose-1-phosphate (MTR-1-P) into methylthioribulose-1-phosphate (MTRu-1-P). This Stenotrophomonas maltophilia (strain R551-3) protein is Methylthioribose-1-phosphate isomerase.